The following is a 375-amino-acid chain: Fluoride export protein 2 (375 aa).

Over 1–11 (MIFNPVISNHK) the chain is Cytoplasmic. The chain crosses the membrane as a helical span at residues 12-32 (LSHYIHVFCTFTTFCILGTET). Over 33-34 (RQ) the chain is Extracellular. The helical transmembrane segment at 35 to 55 (AITALSTYTPAFVTAPTVLWS) threads the bilayer. Residues 56-79 (NCSSCMLMGIMQSLNAYTWMKDHQ) are Cytoplasmic-facing. Residues 80–100 (VLFLGVTTGYCGALSSFSSML) form a helical membrane-spanning segment. Residues 101-127 (LEMFEHSTNLTNGNIANHTKLPNRAYG) lie on the Extracellular side of the membrane. Residues Asn109 and Asn117 are each glycosylated (N-linked (GlcNAc...) asparagine). The helical transmembrane segment at 128 to 148 (IMEFLSVLLVHLMVSMGSLIF) threads the bilayer. Residues 149 to 213 (GRQLGKEVIV…FKKFFDVVDK (65 aa)) are Cytoplasmic-facing. Residues 214 to 234 (LAYALAFPLIILFVVLCAYYE) traverse the membrane as a helical segment. A glycan (N-linked (GlcNAc...) asparagine) is linked at Asn235. The Extracellular segment spans residues 235 to 241 (NYSRGKW). Residues 242–262 (TLPCLFGIFAGFLRYWLAEMF) traverse the membrane as a helical segment. The Cytoplasmic portion of the chain corresponds to 263–268 (NKTNKK). A helical membrane pass occupies residues 269 to 289 (FPLGTFLANVFATLLIGIFTM). Over 290 to 310 (VQRGKKHFSTDIPIVNSLNSC) the chain is Extracellular. Residues 311-331 (HIVSALISGFCGTLSTISTFI) form a helical membrane-spanning segment. Over 332-338 (NEGYKLS) the chain is Cytoplasmic. The chain crosses the membrane as a helical span at residues 339–359 (FINMLIYYTVSIGISYCLLVI). Topologically, residues 360–375 (TLGSYAWTRGLTNPIC) are extracellular.

It belongs to the fluoride channel Fluc/FEX (TC 1.A.43) family.

It localises to the cell membrane. The enzyme catalyses fluoride(in) = fluoride(out). Its function is as follows. Fluoride channel required for the rapid expulsion of cytoplasmic fluoride. The sequence is that of Fluoride export protein 2 from Saccharomyces cerevisiae (strain ATCC 204508 / S288c) (Baker's yeast).